Here is a 486-residue protein sequence, read N- to C-terminus: Maternal protein exuperantia (486 aa).

Disordered regions lie at residues 202–233 (NARV…RDEF) and 386–477 (STIR…ISLP). The span at 218-233 (ADKHVKNGLQKERDEF) shows a compositional bias: basic and acidic residues. Residues 387–397 (TIRRRNKRNTP) show a composition bias toward basic residues. Polar residues-rich tracts occupy residues 420–437 (KSQS…TPSP) and 464–476 (SALN…SISL).

Its function is as follows. Ensures the proper localization of the mRNA of the bicoid gene to the anterior regions of the oocyte thus playing a fundamental role in the establishment of the polarity of the oocyte. May bind the bcd mRNA. The chain is Maternal protein exuperantia (exu) from Drosophila virilis (Fruit fly).